Here is a 266-residue protein sequence, read N- to C-terminus: Energy-coupling factor transporter ATP-binding protein EcfA2 (266 aa).

The ABC transporter domain occupies 3–238; it reads IEVVNVSHIF…YDPRFFTSKM (236 aa). Residue 43–48 coordinates ATP; the sequence is GSGKST. Catalysis depends on Glu-164, which acts as the Proton acceptor. A required for heterodimer formation region spans residues 220–266; that stretch reads GTRMEFLEKYDPRFFTSKMLVMRRLVLKGEDPFSMSDDELLERVCNS.

Belongs to the ABC transporter superfamily. Energy-coupling factor EcfA family. In terms of assembly, forms a heterodimer with EcfA1. Forms a stable energy-coupling factor (ECF) transporter complex composed of 2 membrane-embedded substrate-binding proteins (S component, RibU, BioY), 2 ATP-binding proteins (A component) and 2 transmembrane proteins (T component) upon coexpression in E.coli. Stable subcomplexes with both A plus T components can also be isolated. This complex interacts with at least 2 substrate-specific components, BioY and RibU.

The protein resides in the cell inner membrane. Functionally, ATP-binding (A) component of a common energy-coupling factor (ECF) ABC-transporter complex. Unlike classic ABC transporters this ECF transporter provides the energy necessary to transport a number of different substrates. Expression of the complex plus RibU in E.coli allows riboflavin uptake; uptake does not occur in the absence of RibU or the EcfA1A2T complex. In Thermotoga maritima (strain ATCC 43589 / DSM 3109 / JCM 10099 / NBRC 100826 / MSB8), this protein is Energy-coupling factor transporter ATP-binding protein EcfA2 (ecfA2).